We begin with the raw amino-acid sequence, 239 residues long: Thymidylate kinase (239 aa).

10 to 17 (GVNRVGKS) is an ATP binding site.

Belongs to the thymidylate kinase family.

The catalysed reaction is dTMP + ATP = dTDP + ADP. Its pathway is pyrimidine metabolism; dTTP biosynthesis. Functionally, catalyzes the conversion of dTMP to dTDP. In African swine fever virus (isolate Tick/South Africa/Pretoriuskop Pr4/1996) (ASFV), this protein is Thymidylate kinase (TMK).